The following is a 663-amino-acid chain: UvrABC system protein B (663 aa).

Positions 31-418 (DNIEGGEKAQ…TDTVVEQIIR (388 aa)) constitute a Helicase ATP-binding domain. 44 to 51 (GATGTGKT) contacts ATP. Residues 97-120 (YYDYYQPEAYVPSSDTYIEKDSSV) carry the Beta-hairpin motif. Positions 435-601 (QMDDLLGEIN…TIKKEIRDLI (167 aa)) constitute a Helicase C-terminal domain. Residues 627–662 (QAEIKALQKQMQEAAELLDFELAAQIRDVILKLKAI) enclose the UVR domain.

The protein belongs to the UvrB family. Forms a heterotetramer with UvrA during the search for lesions. Interacts with UvrC in an incision complex.

Its subcellular location is the cytoplasm. Functionally, the UvrABC repair system catalyzes the recognition and processing of DNA lesions. A damage recognition complex composed of 2 UvrA and 2 UvrB subunits scans DNA for abnormalities. Upon binding of the UvrA(2)B(2) complex to a putative damaged site, the DNA wraps around one UvrB monomer. DNA wrap is dependent on ATP binding by UvrB and probably causes local melting of the DNA helix, facilitating insertion of UvrB beta-hairpin between the DNA strands. Then UvrB probes one DNA strand for the presence of a lesion. If a lesion is found the UvrA subunits dissociate and the UvrB-DNA preincision complex is formed. This complex is subsequently bound by UvrC and the second UvrB is released. If no lesion is found, the DNA wraps around the other UvrB subunit that will check the other stand for damage. The protein is UvrABC system protein B of Streptococcus agalactiae serotype Ia (strain ATCC 27591 / A909 / CDC SS700).